The chain runs to 359 residues: Guanine nucleotide-binding protein alpha-4 subunit (359 aa).

Gly2 is lipidated: N-myristoyl glycine. Cys3 carries the S-palmitoyl cysteine lipid modification. The G-alpha domain occupies 31–359 (GEIKLLLLGA…RNNLYLCGLY (329 aa)). Residues 34–47 (KLLLLGAGESGKST) form a G1 motif region. Residues 39–46 (GAGESGKS), 178–184 (LRARVKS), 203–207 (DVGGQ), 272–275 (NKMD), and Ala331 contribute to the GTP site. Ser46 contacts Mg(2+). Residues 176-184 (DILRARVKS) form a G2 motif region. The interval 199–208 (FKMFDVGGQR) is G3 motif. The interval 268–275 (ILFLNKMD) is G4 motif. Residues 329–334 (TCATDT) are G5 motif.

It belongs to the G-alpha family. G(i/o/t/z) subfamily. As to quaternary structure, g proteins are composed of 3 units; alpha, beta and gamma. The alpha chain contains the guanine nucleotide binding site. As to expression, expressed in ASI neurons.

Functionally, guanine nucleotide-binding proteins (G proteins) are involved as modulators or transducers in various transmembrane signaling systems. Acts in concert with npr-15 to activate TGF-beta-like daf-7 secretion in the ASI neuron, thereby promoting larval development and inhibition of dauer diapause. The protein is Guanine nucleotide-binding protein alpha-4 subunit (gpa-4) of Caenorhabditis elegans.